A 288-amino-acid polypeptide reads, in one-letter code: Bifunctional protein FolD (288 aa).

Residues 166 to 168, Ser-191, and Ile-232 each bind NADP(+); that span reads GRS.

This sequence belongs to the tetrahydrofolate dehydrogenase/cyclohydrolase family. Homodimer.

The enzyme catalyses (6R)-5,10-methylene-5,6,7,8-tetrahydrofolate + NADP(+) = (6R)-5,10-methenyltetrahydrofolate + NADPH. The catalysed reaction is (6R)-5,10-methenyltetrahydrofolate + H2O = (6R)-10-formyltetrahydrofolate + H(+). Its pathway is one-carbon metabolism; tetrahydrofolate interconversion. Catalyzes the oxidation of 5,10-methylenetetrahydrofolate to 5,10-methenyltetrahydrofolate and then the hydrolysis of 5,10-methenyltetrahydrofolate to 10-formyltetrahydrofolate. The chain is Bifunctional protein FolD from Rickettsia peacockii (strain Rustic).